A 332-amino-acid polypeptide reads, in one-letter code: Multiple virulence factor regulator MvfR (332 aa).

Residues 4–61 (HNLNHVNMFLQVIASGSISSAARILRKSHTAVSSAVSNLEIDLCVELVRRDGYKVEPT) form the HTH lysR-type domain. A DNA-binding region (H-T-H motif) is located at residues 21–40 (ISSAARILRKSHTAVSSAVS).

The protein belongs to the LysR transcriptional regulatory family. In terms of assembly, forms homooligomers.

It is found in the cell inner membrane. Its subcellular location is the secreted. Both 3,4-dihydroxy-2-heptylquinoline (PQS) and its precursor 4-hydroxy-2-heptylquinoline (HHQ) function as ligands and promote MvfR DNA-binding activity leading to transcriptional activation. Its function is as follows. Transcription regulator that plays a critical role in virulence by positively regulating the expression of multiple quorum sensing (QS)-regulated virulence factors, genes involved in protein secretion, translation, response to oxidative stress and the phnAB operon. At the stationary phase, negatively autoregulates its function through cleavage and translocation to the extracellular space. The sequence is that of Multiple virulence factor regulator MvfR from Pseudomonas aeruginosa (strain ATCC 15692 / DSM 22644 / CIP 104116 / JCM 14847 / LMG 12228 / 1C / PRS 101 / PAO1).